A 473-amino-acid chain; its full sequence is MSEERHEDHHRDVENKLNLNGKDDINGNTSISIEVPDGGYGWFILLAFILYNFSTWGANSGYAIYLAHYLENNTFAGGSKLDYASIGGLAFSCGLFFAPVITWLYHIFSIQFIIGLGILFQGAALLLAAFSVTLWEIYLTQGVLIGFGLAFIFIPSVTLIPLWFRNKRSLASGIGTAGSGLGGIVFNLGMQSILQKRGVKWALIAQCIICTSLSTIALMLTRTTHQGLRQHKRSYKFELLDYDVLSNFAVWLLFGFVSFAMLGYVVLLYSLSDFTVSLGYTSKQGSYVSCMVSVGSLLGRPIVGHIADKYGSLTVGMILHLVMAILCWAMWIPCKNLATAIAFGLLVGSIMGTIWPTIASIVTRIVGLQKLPGTFGSTWIFMAAFALVAPIIGLELRSTDTNGNDYYRTAIFVGFAYFGVSLCQWLLRGFIIARDEIAVREAYSADQNELHLNVKLSHMSKCLFRYKQLPRRV.

Residues Met-1–Asp-37 lie on the Cytoplasmic side of the membrane. Residues Gly-38–Ala-58 form a helical membrane-spanning segment. Over Asn-59–Tyr-83 the chain is Extracellular. An N-linked (GlcNAc...) asparagine glycan is attached at Asn-72. Residues Ala-84–Tyr-105 form a helical membrane-spanning segment. Over His-106–Gln-111 the chain is Cytoplasmic. Residues Phe-112–Trp-135 form a helical membrane-spanning segment. Over Glu-136–Gln-141 the chain is Extracellular. Residues Gly-142 to Trp-163 traverse the membrane as a helical segment. At Phe-164–Ser-169 the chain is on the cytoplasmic side. The chain crosses the membrane as a helical span at residues Leu-170–Phe-186. Topologically, residues Asn-187–Lys-200 are extracellular. The chain crosses the membrane as a helical span at residues Trp-201 to Leu-220. Over Thr-221–Asp-243 the chain is Cytoplasmic. The helical transmembrane segment at Val-244–Leu-268 threads the bilayer. Over Tyr-269–Ser-286 the chain is Extracellular. The chain crosses the membrane as a helical span at residues Tyr-287–Gly-304. Topologically, residues His-305–Ser-312 are cytoplasmic. A helical transmembrane segment spans residues Leu-313–Ile-332. Topologically, residues Pro-333 to Ala-342 are extracellular. Residues Phe-343–Val-362 form a helical membrane-spanning segment. At Thr-363–Lys-370 the chain is on the cytoplasmic side. Residues Leu-371–Leu-394 traverse the membrane as a helical segment. Topologically, residues Glu-395–Arg-408 are extracellular. Residues Thr-409 to Ala-433 traverse the membrane as a helical segment. The Cytoplasmic portion of the chain corresponds to Arg-434–Val-473.

It belongs to the major facilitator superfamily. Monocarboxylate porter (TC 2.A.1.13) family.

The protein localises to the membrane. In terms of biological role, probable transporter. Does not act in the transport of monocarboxylic acids across the plasma membrane. The sequence is that of Probable transporter MCH2 (MCH2) from Saccharomyces cerevisiae (strain ATCC 204508 / S288c) (Baker's yeast).